Here is a 394-residue protein sequence, read N- to C-terminus: Ceramide glucosyltransferase-A (394 aa).

Over Met1–Gly10 the chain is Lumenal. A helical transmembrane segment spans residues Leu11 to Tyr32. The Cytoplasmic segment spans residues Thr33–Arg195. A short sequence motif (D1) is located at residue Asp92. Residue Asp144 is a short sequence motif, D2. A helical membrane pass occupies residues Ser196–Met215. Topologically, residues Arg216–Thr287 are lumenal. A short sequence motif (D3) is located at residue Asp236. Asp236 serves as the catalytic Proton acceptor. A (Q/R)XXRW motif is present at residues Arg272 to Trp276. A helical membrane pass occupies residues Ile288–Gly304. Residues Trp305–His309 lie on the Cytoplasmic side of the membrane. A helical membrane pass occupies residues Ile310–Ile328. Topologically, residues Phe329–Asp348 are lumenal. The chain crosses the membrane as a helical span at residues Tyr349–Trp369. Residues Asp370 to Val394 lie on the Cytoplasmic side of the membrane.

Belongs to the glycosyltransferase 2 family. At the late gastrula stage, weakly expressed ubiquitously. As neurulation proceeds (stages 15-16), expression moves towards the dorsal structures: involuted paraxial mesoderm and neural folds. In the tailbud embryo (stage 28), expression is restricted to the notochord. At later stages (stage 35), expression remains in the notochord and also appears weakly in the cephalic region.

The protein localises to the golgi apparatus membrane. It catalyses the reaction an N-acylsphing-4-enine + UDP-alpha-D-glucose = a beta-D-glucosyl-(1&lt;-&gt;1')-N-acylsphing-4-enine + UDP + H(+). The enzyme catalyses UDP-alpha-D-xylose + an N-acylsphing-4-enine = a beta-D-xylosyl-(1&lt;-&gt;1')-N-acylsphing-4-enine + UDP + H(+). The catalysed reaction is N-(9Z-octadecenoyl)-sphing-4-enine + UDP-alpha-D-xylose = beta-D-xylosyl-(1&lt;-&gt;1')-N-(9Z-octadecenoyl)-sphing-4-enine + UDP + H(+). The protein operates within lipid metabolism; sphingolipid metabolism. In terms of biological role, participates in the initial step of the glucosylceramide-based glycosphingolipid/GSL synthetic pathway at the cytosolic surface of the Golgi. Catalyzes the transfer of glucose from UDP-glucose to ceramide to produce glucosylceramide/GlcCer (such as beta-D-glucosyl-(1&lt;-&gt;1')-N-acylsphing-4-enine). Glucosylceramide is the core component of glycosphingolipids/GSLs, amphipathic molecules consisting of a ceramide lipid moiety embedded in the outer leaflet of the membrane, linked to one of hundreds of different externally oriented oligosaccharide structures. Glycosphingolipids are essential components of membrane microdomains that mediate membrane trafficking and signal transduction. They are implicated in many fundamental cellular processes, including growth, differentiation, migration, morphogenesis, cell-to-cell and cell-to-matrix interactions. Glycosphingolipids are required for convergence extension movements during early development. Catalyzes the synthesis of xylosylceramide/XylCer (such as beta-D-xylosyl-(1&lt;-&gt;1')-N-acylsphing-4-enine) using UDP-Xyl as xylose donor. The protein is Ceramide glucosyltransferase-A (ugcg-a) of Xenopus laevis (African clawed frog).